The sequence spans 241 residues: LexA repressor (241 aa).

The H-T-H motif DNA-binding region spans 26-46 (FDEMKTALDLRSKSGIHRLIT). Catalysis depends on for autocatalytic cleavage activity residues Ser162 and Lys200.

The protein belongs to the peptidase S24 family. As to quaternary structure, homodimer.

The enzyme catalyses Hydrolysis of Ala-|-Gly bond in repressor LexA.. Its function is as follows. Represses a number of genes involved in the response to DNA damage (SOS response), including recA and lexA. In the presence of single-stranded DNA, RecA interacts with LexA causing an autocatalytic cleavage which disrupts the DNA-binding part of LexA, leading to derepression of the SOS regulon and eventually DNA repair. This chain is LexA repressor, found in Ruegeria sp. (strain TM1040) (Silicibacter sp.).